We begin with the raw amino-acid sequence, 250 residues long: Ubiquinone/menaquinone biosynthesis C-methyltransferase UbiE (250 aa).

Residues Thr73, Asp94, 122-123 (NA), and Ser139 contribute to the S-adenosyl-L-methionine site.

This sequence belongs to the class I-like SAM-binding methyltransferase superfamily. MenG/UbiE family.

It carries out the reaction a 2-demethylmenaquinol + S-adenosyl-L-methionine = a menaquinol + S-adenosyl-L-homocysteine + H(+). It catalyses the reaction a 2-methoxy-6-(all-trans-polyprenyl)benzene-1,4-diol + S-adenosyl-L-methionine = a 5-methoxy-2-methyl-3-(all-trans-polyprenyl)benzene-1,4-diol + S-adenosyl-L-homocysteine + H(+). The protein operates within quinol/quinone metabolism; menaquinone biosynthesis; menaquinol from 1,4-dihydroxy-2-naphthoate: step 2/2. Its pathway is cofactor biosynthesis; ubiquinone biosynthesis. Functionally, methyltransferase required for the conversion of demethylmenaquinol (DMKH2) to menaquinol (MKH2) and the conversion of 2-polyprenyl-6-methoxy-1,4-benzoquinol (DDMQH2) to 2-polyprenyl-3-methyl-6-methoxy-1,4-benzoquinol (DMQH2). The polypeptide is Ubiquinone/menaquinone biosynthesis C-methyltransferase UbiE (Francisella tularensis subsp. tularensis (strain WY96-3418)).